The chain runs to 202 residues: Probable thymidylate kinase (202 aa).

Residue 13–20 coordinates ATP; sequence GIDGSGKT.

The protein belongs to the thymidylate kinase family.

The enzyme catalyses dTMP + ATP = dTDP + ADP. The polypeptide is Probable thymidylate kinase (Picrophilus torridus (strain ATCC 700027 / DSM 9790 / JCM 10055 / NBRC 100828 / KAW 2/3)).